The sequence spans 284 residues: 2-dehydro-3-deoxyphosphooctonate aldolase (284 aa).

This sequence belongs to the KdsA family.

The protein localises to the cytoplasm. It catalyses the reaction D-arabinose 5-phosphate + phosphoenolpyruvate + H2O = 3-deoxy-alpha-D-manno-2-octulosonate-8-phosphate + phosphate. Its pathway is carbohydrate biosynthesis; 3-deoxy-D-manno-octulosonate biosynthesis; 3-deoxy-D-manno-octulosonate from D-ribulose 5-phosphate: step 2/3. The protein operates within bacterial outer membrane biogenesis; lipopolysaccharide biosynthesis. In Photorhabdus laumondii subsp. laumondii (strain DSM 15139 / CIP 105565 / TT01) (Photorhabdus luminescens subsp. laumondii), this protein is 2-dehydro-3-deoxyphosphooctonate aldolase.